The sequence spans 457 residues: Protein translocase subunit SecY (457 aa).

10 helical membrane passes run 17 to 37, 75 to 95, 118 to 138, 162 to 182, 195 to 215, 230 to 250, 287 to 307, 326 to 346, 386 to 406, and 412 to 432; these read IFFTFSLLALCRIGVFIPVPG, IALGVVPYISASIIVQLLVVF, TRLFTLVLACVQSLLFAKFAL, WVFYLTTVVVMITGTLLLMWV, ISLIITLGILASFPSVLGSIF, IVSLLILCAVFVFVLMATVLI, VIPVIFASSLLMFPATIGQFL, VAYSIFYVLLIIFFTYFWTAT, LLGAVFLAVVAILPSILGRIL, and VSYFLGGTAMLIVVGVILDTM.

Belongs to the SecY/SEC61-alpha family. As to quaternary structure, component of the Sec protein translocase complex. Heterotrimer consisting of SecY, SecE and SecG subunits. The heterotrimers can form oligomers, although 1 heterotrimer is thought to be able to translocate proteins. Interacts with the ribosome. Interacts with SecDF, and other proteins may be involved. Interacts with SecA.

The protein resides in the cell inner membrane. The central subunit of the protein translocation channel SecYEG. Consists of two halves formed by TMs 1-5 and 6-10. These two domains form a lateral gate at the front which open onto the bilayer between TMs 2 and 7, and are clamped together by SecE at the back. The channel is closed by both a pore ring composed of hydrophobic SecY resides and a short helix (helix 2A) on the extracellular side of the membrane which forms a plug. The plug probably moves laterally to allow the channel to open. The ring and the pore may move independently. This is Protein translocase subunit SecY from Chlamydia trachomatis serovar D (strain ATCC VR-885 / DSM 19411 / UW-3/Cx).